Reading from the N-terminus, the 650-residue chain is Serine/threonine-protein phosphatase with EF-hands 1 (650 aa).

The IQ domain maps to valine 16–phenylalanine 45. Residues isoleucine 124 to serine 456 form a catalytic region. Residues aspartate 175, histidine 177, aspartate 204, and asparagine 236 each coordinate Mn(2+). The active-site Proton donor is histidine 237. Residue histidine 288 coordinates Mn(2+). Residues proline 315–aspartate 348 are disordered. The segment covering glutamate 335–aspartate 348 has biased composition (basic and acidic residues). A Mn(2+)-binding site is contributed by histidine 404. EF-hand domains follow at residues serine 484–leucine 519, arginine 567–histidine 602, and isoleucine 607–tyrosine 642. The Ca(2+) site is built by aspartate 497, serine 499, serine 501, arginine 503, glutamate 508, aspartate 580, aspartate 582, serine 584, glutamate 591, aspartate 620, asparagine 622, aspartate 624, asparagine 626, and glutamate 631.

The protein belongs to the PPP phosphatase family. The cofactor is Mn(2+). Requires Mg(2+) as cofactor. In the embryo it is almost exclusively expressed in the peripheral nervous system, within sensory neurons of cranial and dorsal root ganglia. Otherwise found in fetal inner ear and a small group of neurons in the midbrain/pons junction.

It carries out the reaction O-phospho-L-seryl-[protein] + H2O = L-seryl-[protein] + phosphate. The catalysed reaction is O-phospho-L-threonyl-[protein] + H2O = L-threonyl-[protein] + phosphate. Its activity is regulated as follows. Activated by calcium. May have a role in the recovery or adaptation response of photoreceptors. May have a role in diverse sensory neurons and in development. This is Serine/threonine-protein phosphatase with EF-hands 1 (Ppef1) from Mus musculus (Mouse).